The chain runs to 481 residues: Thiol protease (481 aa).

The Calpain catalytic domain maps to 169-481; that stretch reads DLREQALSST…ENFWYIAYMY (313 aa). Residues C229, H406, and N426 contribute to the active site.

It belongs to the peptidase C2 family.

Inactive below 20 degrees Celsius and pH 6.0. Inhibited by divalent cations. Its function is as follows. Thiol protease. Probably an important virulence factor. The sequence is that of Thiol protease (tpr) from Porphyromonas gingivalis (strain ATCC BAA-308 / W83).